We begin with the raw amino-acid sequence, 150 residues long: D-aminoacyl-tRNA deacylase (150 aa).

Positions 138 to 139 (GP) match the Gly-cisPro motif, important for rejection of L-amino acids motif.

Belongs to the DTD family. As to quaternary structure, homodimer.

The protein localises to the cytoplasm. The catalysed reaction is glycyl-tRNA(Ala) + H2O = tRNA(Ala) + glycine + H(+). It catalyses the reaction a D-aminoacyl-tRNA + H2O = a tRNA + a D-alpha-amino acid + H(+). In terms of biological role, an aminoacyl-tRNA editing enzyme that deacylates mischarged D-aminoacyl-tRNAs. Also deacylates mischarged glycyl-tRNA(Ala), protecting cells against glycine mischarging by AlaRS. Acts via tRNA-based rather than protein-based catalysis; rejects L-amino acids rather than detecting D-amino acids in the active site. By recycling D-aminoacyl-tRNA to D-amino acids and free tRNA molecules, this enzyme counteracts the toxicity associated with the formation of D-aminoacyl-tRNA entities in vivo and helps enforce protein L-homochirality. The chain is D-aminoacyl-tRNA deacylase from Chlorobaculum tepidum (strain ATCC 49652 / DSM 12025 / NBRC 103806 / TLS) (Chlorobium tepidum).